The following is a 107-amino-acid chain: uncharacterized protein (107 aa).

The N-terminal stretch at 1-18 (MRTLMLIILSILIYLSSA) is a signal peptide.

This is an uncharacterized protein from Caenorhabditis elegans.